A 906-amino-acid chain; its full sequence is Coatomer subunit beta' (906 aa).

6 WD repeats span residues 13 to 52 (ARSD…LVKT), 55 to 94 (VCDL…RVHM), 97 to 136 (AHSD…SCSQ), 140 to 180 (GHTH…PNFT), 183 to 224 (GHEK…CVQT), and 227 to 266 (GHAQ…LEST). N6-acetyllysine is present on K627. The segment at 837–870 (EEGKDFQPSRSTAQQELDGKPASPTPVIVASHTA) is disordered. S859 carries the post-translational modification Phosphoserine. Residue T861 is modified to Phosphothreonine. Residues 866-891 (ASHTANKEEKSLLELEVDLDNLELED) are a coiled coil.

It belongs to the WD repeat COPB2 family. In terms of assembly, oligomeric complex that consists of at least the alpha, beta, beta', gamma, delta, epsilon and zeta subunits. Probably interacts with PEX11A. Interacts with SCYL1. Interacts with JAGN1.

Its subcellular location is the cytoplasm. It localises to the cytosol. The protein localises to the golgi apparatus membrane. The protein resides in the cytoplasmic vesicle. It is found in the COPI-coated vesicle membrane. The coatomer is a cytosolic protein complex that binds to dilysine motifs and reversibly associates with Golgi non-clathrin-coated vesicles, which further mediate biosynthetic protein transport from the ER, via the Golgi up to the trans Golgi network. Coatomer complex is required for budding from Golgi membranes, and is essential for the retrograde Golgi-to-ER transport of dilysine-tagged proteins. In mammals, the coatomer can only be recruited by membranes associated to ADP-ribosylation factors (ARFs), which are small GTP-binding proteins; the complex also influences the Golgi structural integrity, as well as the processing, activity, and endocytic recycling of LDL receptors. In terms of biological role, this coatomer complex protein, essential for Golgi budding and vesicular trafficking, is a selective binding protein (RACK) for protein kinase C, epsilon type. It binds to Golgi membranes in a GTP-dependent manner. This Homo sapiens (Human) protein is Coatomer subunit beta' (COPB2).